The chain runs to 192 residues: ATP synthase protein MI25 (192 aa).

Residues 29 to 49 (ISIYNEEMIVARCFIGFLIFS) traverse the membrane as a helical segment.

Belongs to the ATPase protein MI25 family. In terms of assembly, F-type ATPases have 2 components, CF(1) - the catalytic core - and CF(0) - the membrane proton channel. CF(1) has five subunits: alpha(3), beta(3), gamma(1), delta(1), epsilon(1). CF(0) has three main subunits: a, b and c.

It localises to the mitochondrion membrane. Its function is as follows. This is one of the chains of the nonenzymatic component (CF(0) subunit) of the mitochondrial ATPase complex. This Triticum timopheevii (Timopheev's wheat) protein is ATP synthase protein MI25.